Here is a 329-residue protein sequence, read N- to C-terminus: NADH-quinone oxidoreductase subunit H (329 aa).

9 helical membrane passes run 9 to 29, 42 to 62, 75 to 95, 117 to 137, 154 to 174, 188 to 208, 238 to 258, 269 to 291, and 309 to 329; these read LIKILILVAVFSALGGFATYI, GPCYVGPFGLLQVAADGIKLF, FIFTLAPIIAMVSAFVSMAPI, IGFLFFLAVGAAGIYAPILAG, IQLLSFEVVSTLTILAPLMVV, GGFLDWLVFKQPLAFVLFLIA, LKWGMFFLAEYAHLFAFSFVI, WGFIPGGIAILIKAGFFVFLSMW, and WKIMLPLALLNIVLTGIIILI.

Belongs to the complex I subunit 1 family. NDH-1 is composed of 14 different subunits. Subunits NuoA, H, J, K, L, M, N constitute the membrane sector of the complex.

The protein localises to the cell inner membrane. The catalysed reaction is a quinone + NADH + 5 H(+)(in) = a quinol + NAD(+) + 4 H(+)(out). NDH-1 shuttles electrons from NADH, via FMN and iron-sulfur (Fe-S) centers, to quinones in the respiratory chain. The immediate electron acceptor for the enzyme in this species is believed to be ubiquinone. Couples the redox reaction to proton translocation (for every two electrons transferred, four hydrogen ions are translocated across the cytoplasmic membrane), and thus conserves the redox energy in a proton gradient. This subunit may bind ubiquinone. In Helicobacter pylori (strain HPAG1), this protein is NADH-quinone oxidoreductase subunit H.